Reading from the N-terminus, the 420-residue chain is UDP-N-acetylglucosamine 1-carboxyvinyltransferase (420 aa).

A phosphoenolpyruvate-binding site is contributed by 22-23 (KN). Arginine 95 is a UDP-N-acetyl-alpha-D-glucosamine binding site. Cysteine 119 functions as the Proton donor in the catalytic mechanism. Residue cysteine 119 is modified to 2-(S-cysteinyl)pyruvic acid O-phosphothioketal. UDP-N-acetyl-alpha-D-glucosamine contacts are provided by residues 124-128 (RPIDQ), aspartate 307, and isoleucine 329.

The protein belongs to the EPSP synthase family. MurA subfamily.

The protein localises to the cytoplasm. It catalyses the reaction phosphoenolpyruvate + UDP-N-acetyl-alpha-D-glucosamine = UDP-N-acetyl-3-O-(1-carboxyvinyl)-alpha-D-glucosamine + phosphate. Its pathway is cell wall biogenesis; peptidoglycan biosynthesis. Its function is as follows. Cell wall formation. Adds enolpyruvyl to UDP-N-acetylglucosamine. This chain is UDP-N-acetylglucosamine 1-carboxyvinyltransferase, found in Myxococcus xanthus (strain DK1622).